The chain runs to 720 residues: Protein unc-112 (720 aa).

2 disordered regions span residues 145–170 (DLRR…ESVG) and 210–236 (MGTL…TMRR). Positions 288-614 (WLDSSRSLME…ALPEHGIHYF (327 aa)) constitute an FERM domain. The PH domain maps to 402-507 (VPELADYLKY…WMAACRLASR (106 aa)).

The protein belongs to the kindlin family. As to quaternary structure, interacts with pat-4/ILK. Probably forms a complex with pat-4 and pat-6. Component of an integrin containing attachment complex, composed of at least pat-2, pat-3, pat-4, pat-6, unc-52, unc-97 and unc-112. As to expression, mainly expressed in muscle cells in both embryos and adults.

It localises to the cell membrane. The protein resides in the cytoplasm. It is found in the myofibril. Its subcellular location is the sarcomere. The protein localises to the m line. Component of an integrin containing attachment complex, which is required for muscle development and maintenance. Probable regulator of cell-extracellular matrix adhesion. Required during initial muscle assembly to form dense bodies and M-lines. The protein is Protein unc-112 of Caenorhabditis elegans.